We begin with the raw amino-acid sequence, 511 residues long: 2,3-bisphosphoglycerate-independent phosphoglycerate mutase (511 aa).

Mn(2+) is bound at residue aspartate 12. A Phosphotyrosine modification is found at tyrosine 36. Serine 62 contacts Mn(2+). Serine 62 serves as the catalytic Phosphoserine intermediate. Residues histidine 123, 153-154, arginine 185, arginine 191, 261-264, and lysine 336 each bind substrate; these read RD and RPDR. Mn(2+)-binding residues include aspartate 403, histidine 407, aspartate 444, histidine 445, and histidine 462.

It belongs to the BPG-independent phosphoglycerate mutase family. In terms of assembly, monomer. The cofactor is Mn(2+).

It catalyses the reaction (2R)-2-phosphoglycerate = (2R)-3-phosphoglycerate. Its pathway is carbohydrate degradation; glycolysis; pyruvate from D-glyceraldehyde 3-phosphate: step 3/5. Functionally, essential for rapid growth and for sporulation. Catalyzes the interconversion of 2-phosphoglycerate and 3-phosphoglycerate. The sequence is that of 2,3-bisphosphoglycerate-independent phosphoglycerate mutase from Bacillus pumilus (strain SAFR-032).